The following is a 395-amino-acid chain: S-adenosylmethionine synthase (395 aa).

His18 contacts ATP. Position 20 (Asp20) interacts with Mg(2+). K(+) is bound at residue Glu46. L-methionine-binding residues include Glu59 and Gln103. The tract at residues Gln103–Ser113 is flexible loop. Residues Asp170–Lys172, Lys235–Phe236, Asp244, Arg250–Lys251, Ala267, and Lys271 contribute to the ATP site. Residue Asp244 participates in L-methionine binding. Residue Lys275 coordinates L-methionine.

This sequence belongs to the AdoMet synthase family. As to quaternary structure, homotetramer; dimer of dimers. Mg(2+) is required as a cofactor. The cofactor is K(+).

It localises to the cytoplasm. It catalyses the reaction L-methionine + ATP + H2O = S-adenosyl-L-methionine + phosphate + diphosphate. It functions in the pathway amino-acid biosynthesis; S-adenosyl-L-methionine biosynthesis; S-adenosyl-L-methionine from L-methionine: step 1/1. Its function is as follows. Catalyzes the formation of S-adenosylmethionine (AdoMet) from methionine and ATP. The overall synthetic reaction is composed of two sequential steps, AdoMet formation and the subsequent tripolyphosphate hydrolysis which occurs prior to release of AdoMet from the enzyme. The polypeptide is S-adenosylmethionine synthase (Granulibacter bethesdensis (strain ATCC BAA-1260 / CGDNIH1)).